The primary structure comprises 94 residues: CRISPR-associated endoribonuclease Cas2 1 (94 aa).

D8 contacts Mg(2+).

This sequence belongs to the CRISPR-associated endoribonuclease Cas2 protein family. As to quaternary structure, homodimer, forms a heterotetramer with a Cas1 homodimer. Mg(2+) is required as a cofactor.

Functionally, CRISPR (clustered regularly interspaced short palindromic repeat), is an adaptive immune system that provides protection against mobile genetic elements (viruses, transposable elements and conjugative plasmids). CRISPR clusters contain sequences complementary to antecedent mobile elements and target invading nucleic acids. CRISPR clusters are transcribed and processed into CRISPR RNA (crRNA). Functions as a ssRNA-specific endoribonuclease. Involved in the integration of spacer DNA into the CRISPR cassette. The protein is CRISPR-associated endoribonuclease Cas2 1 of Synechocystis sp. (strain ATCC 27184 / PCC 6803 / Kazusa).